We begin with the raw amino-acid sequence, 184 residues long: uncharacterized protein (184 aa).

The signal sequence occupies residues 1-20 (MYQLEKIWVLLCLALVGVLG).

This is an uncharacterized protein from Drosophila melanogaster (Fruit fly).